Consider the following 226-residue polypeptide: Large ribosomal subunit protein uL1 (226 aa).

Belongs to the universal ribosomal protein uL1 family. Part of the 50S ribosomal subunit.

Its function is as follows. Binds directly to 23S rRNA. The L1 stalk is quite mobile in the ribosome, and is involved in E site tRNA release. Functionally, protein L1 is also a translational repressor protein, it controls the translation of the L11 operon by binding to its mRNA. This chain is Large ribosomal subunit protein uL1, found in Borreliella burgdorferi (strain ZS7) (Borrelia burgdorferi).